The following is a 515-amino-acid chain: Cytosolic Fe-S cluster assembly factor NAR1 homolog (515 aa).

The [4Fe-4S] cluster site is built by Cys19, Cys65, Cys68, Cys71, Cys192, Cys247, Cys428, and Cys432.

Belongs to the NARF family.

Functionally, component of the cytosolic Fe/S protein assembly machinery. Required for maturation of extramitochondrial Fe/S proteins. May play a role in the transfer of pre-assembled Fe/S clusters to target apoproteins. The polypeptide is Cytosolic Fe-S cluster assembly factor NAR1 homolog (Schizosaccharomyces japonicus (strain yFS275 / FY16936) (Fission yeast)).